The chain runs to 641 residues: Putative ABC transporter ATP-binding protein MA_0870 (641 aa).

Residues 10-250 (IEIKDLWYTY…IEVFHRLGLR (241 aa)) enclose the ABC transporter 1 domain. Residue 44–51 (GPTGCGKS) coordinates ATP. The disordered stretch occupies residues 286-332 (VKTPRNFSNPEEETGRRTDPAERNEFVNTGSGNIKYGDNRSENKGSE). 2 stretches are compositionally biased toward basic and acidic residues: residues 298–310 (ETGRRTDPAERNE) and 322–332 (GDNRSENKGSE). The ABC transporter 2 domain maps to 338 to 566 (ISIRDLWSGY…IEILKQASLT (229 aa)). Position 371 to 378 (371 to 378 (GTNGSGKS)) interacts with ATP.

Belongs to the ABC transporter superfamily.

The protein resides in the cell membrane. Functionally, probably part of an ABC transporter complex. Responsible for energy coupling to the transport system. The chain is Putative ABC transporter ATP-binding protein MA_0870 from Methanosarcina acetivorans (strain ATCC 35395 / DSM 2834 / JCM 12185 / C2A).